Reading from the N-terminus, the 285-residue chain is Nucleotide-binding protein Pnap_0906 (285 aa).

8–15 contributes to the ATP binding site; sequence GMSGSGKS. Position 57 to 60 (57 to 60) interacts with GTP; the sequence is DVRS.

The protein belongs to the RapZ-like family.

Displays ATPase and GTPase activities. This is Nucleotide-binding protein Pnap_0906 from Polaromonas naphthalenivorans (strain CJ2).